The chain runs to 233 residues: Ribonuclease HII (233 aa).

Residues 26–215 enclose the RNase H type-2 domain; that stretch reads QLVAGIDEVG…VRASEGEGLE (190 aa). Residues Asp32, Glu33, and Asp124 each coordinate a divalent metal cation. The disordered stretch occupies residues 211 to 233; it reads GEGLETAAGRQSSEGKKGRRPRG.

The protein belongs to the RNase HII family. Requires Mn(2+) as cofactor. It depends on Mg(2+) as a cofactor.

It localises to the cytoplasm. The catalysed reaction is Endonucleolytic cleavage to 5'-phosphomonoester.. In terms of biological role, endonuclease that specifically degrades the RNA of RNA-DNA hybrids. In Syntrophobacter fumaroxidans (strain DSM 10017 / MPOB), this protein is Ribonuclease HII.